A 170-amino-acid polypeptide reads, in one-letter code: Adenine phosphoribosyltransferase (170 aa).

The protein belongs to the purine/pyrimidine phosphoribosyltransferase family. In terms of assembly, homodimer.

It is found in the cytoplasm. The enzyme catalyses AMP + diphosphate = 5-phospho-alpha-D-ribose 1-diphosphate + adenine. It participates in purine metabolism; AMP biosynthesis via salvage pathway; AMP from adenine: step 1/1. Functionally, catalyzes a salvage reaction resulting in the formation of AMP, that is energically less costly than de novo synthesis. This Brachyspira hyodysenteriae (strain ATCC 49526 / WA1) protein is Adenine phosphoribosyltransferase.